Consider the following 1200-residue polypeptide: Ice nucleation protein (1200 aa).

Residues 176 to 1151 (ATYGSTLSGD…LSAGEDSILI (976 aa)) are octapeptide periodicity.

This sequence belongs to the bacterial ice nucleation protein family.

The protein resides in the cell outer membrane. Its function is as follows. Ice nucleation proteins enable bacteria to nucleate crystallization in supercooled water. The chain is Ice nucleation protein (inaZ) from Pseudomonas syringae pv. syringae.